The following is a 487-amino-acid chain: uncharacterized protein (487 aa).

This is an uncharacterized protein from Bacillus subtilis (strain 168).